The following is a 1914-amino-acid chain: MGDVKLVASSHISKTSLSVDPSRVDSMPLTEAPAFILPPRNLCIKEGATAKFEGRVRGYPEPQVTWHRNGQPITSGGRFLLDCGIRGTFSLVIHAVHEEDRGKYTCEATNGSGARQVTVELTVEGSFAKQLGQPVVSKTLGDRFSAPAVETRPSIWGECPPKFATKLGRVVVKEGQMGRFSCKITGRPQPQVTWLKGNVPLQPSARVSVSEKNGMQVLEIHGVNQDDVGVYTCLVVNGSGKASMSAELSIQGLDSANRSFVRETKATNSDVRKEVTNVISKESKLDSLEAAAKSKNCSSPQRGGSPPWAANSQPQPPRESKLESCKDSPRTAPQTPVLQKTSSSITLQAARVQPEPRAPGLGVLSPSGEERKRPAPPRPATFPTRQPGLGSQDVVSKAANRRIPMEGQRDSAFPKFESKPQSQEVKENQTVKFRCEVSGIPKPEVAWFLEGTPVRRQEGSIEVYEDAGSHYLCLLKARTRDSGTYSCTASNAQGQLSCSWTLQVERLAVMEVAPSFSSVLKDCAVIEGQDFVLQCSVRGTPVPRITWLLNGQPIQYARSTCEAGVAELHIQDALPEDHGTYTCLAENALGQVSCSAWVTVHEKKSSRKSEYLLPVAPSKPTAPIFLQGLSDLKVMDGSQVTMTVQVSGNPPPEVIWLHNGNEIQESEDFHFEQRGTQHSLCIQEVFPEDTGTYTCEAWNSAGEVRTQAVLTVQEPHDGTQPWFISKPRSVTASLGQSVLISCAIAGDPFPTVHWLRDGKALCKDTGHFEVLQNEDVFTLVLKKVQPWHAGQYEILLKNRVGECSCQVSLMLQNSSARALPRGREPASCEDLCGGGVGADGGGSDRYGSLRPGWPARGQGWLEEEDGEDVRGVLKRRVETRQHTEEAIRQQEVEQLDFRDLLGKKVSTKTLSEDDLKEIPAEQMDFRANLQRQVKPKTVSEEERKVHSPQQVDFRSVLAKKGTSKTPVPEKVPPPKPATPDFRSVLGGKKKLPAENGSSSAETLNAKAVESSKPLSNAQPSGPLKPVGNAKPAETLKPMGNAKPAETLKPMGNAKPDENLKSASKEELKKDVKNDVNCKRGHAGTTDNEKRSESQGTAPAFKQKLQDVHVAEGKKLLLQCQVSSDPPATIIWTLNGKTLKTTKFIILSQEGSLCSVSIEKALPEDRGLYKCVAKNDAGQAECSCQVTVDDAPASENTKAPEMKSRRPKSSLPPVLGTESDATVKKKPAPKTPPKAAMPPQIIQFPEDQKVRAGESVELFGKVTGTQPITCTWMKFRKQIQESEHMKVENSENGSKLTILAARQEHCGCYTLLVENKLGSRQAQVNLTVVDKPDPPAGTPCASDIRSSSLTLSWYGSSYDGGSAVQSYSIEIWDSANKTWKELATCRSTSFNVQDLLPDHEYKFRVRAINVYGTSEPSQESELTTVGEKPEEPKDEVEVSDDDEKEPEVDYRTVTINTEQKVSDFYDIEERLGSGKFGQVFRLVEKKTRKVWAGKFFKAYSAKEKENIRQEISIMNCLHHPKLVQCVDAFEEKANIVMVLEIVSGGELFERIIDEDFELTERECIKYMRQISEGVEYIHKQGIVHLDLKPENIMCVNKTGTRIKLIDFGLARRLENAGSLKVLFGTPEFVAPEVINYEPIGYATDMWSIGVICYILVSGLSPFMGDNDNETLANVTSATWDFDDEAFDEISDDAKDFISNLLKKDMKNRLDCTQCLQHPWLMKDTKNMEAKKLSKDRMKKYMARRKWQKTGNAVRAIGRLSSMAMISGLSGRKSSTGSPTSPLNAEKLESEEDVSQAFLEAVAEEKPHVKPYFSKTIRDLEVVEGSAARFDCKIEGYPDPEVVWFKDDQSIRESRHFQIDYDEDGNCSLIISDVCGDDDAKYTCKAVNSLGEATCTAELIVETMEEGEGEGEEEEE.

Gly2 is subject to N-acetylalanine. Ig-like C2-type domains follow at residues 33–122 and 161–249; these read PAFI…VELT and PKFA…AELS. Residues Cys182 and Cys233 are joined by a disulfide bond. A Phosphotyrosine; by ABL1 modification is found at Tyr231. The interval 286–393 is disordered; it reads DSLEAAAKSK…TRQPGLGSQD (108 aa). Phosphoserine is present on Ser305. Positions 318–329 are enriched in basic and acidic residues; sequence RESKLESCKDSP. Over residues 331 to 347 the composition is skewed to polar residues; that stretch reads TAPQTPVLQKTSSSITL. A phosphoserine mark is found at Ser343 and Ser365. 2 consecutive Ig-like C2-type domains span residues 414–503 and 514–599; these read PKFE…WTLQ and PSFS…AWVT. Cystine bridges form between Cys435–Cys487 and Cys535–Cys583. Phosphotyrosine; by ABL1 and SRC is present on Tyr464. A Phosphotyrosine; by SRC modification is found at Tyr471. Residue Tyr556 is modified to Phosphotyrosine; by ABL1. Position 608 is an N6-acetyllysine (Lys608). At Tyr611 the chain carries Phosphotyrosine; by ABL1. 2 Ig-like C2-type domains span residues 620 to 711 and 721 to 821; these read PTAP…AVLT and PWFI…ALPR. Cys742 and Cys805 are disulfide-bonded. Tyr792 and Tyr846 each carry phosphotyrosine; by ABL1. 4 tandem repeats follow at residues 868–895, 896–923, 924–951, and 952–979. The interval 868–998 is 5 X 28 AA approximate tandem repeats; sequence DVRGVLKRRV…KKLPAENGSS (131 aa). Positions 923 to 963 are actin-binding (calcium/calmodulin-sensitive); sequence MDFRANLQRQVKPKTVSEEERKVHSPQQVDFRSVLAKKGTS. The interval 932–1098 is disordered; it reads QVKPKTVSEE…KRSESQGTAP (167 aa). Phosphoserine is present on Ser947. Positions 948–963 are calmodulin-binding; sequence PQQVDFRSVLAKKGTS. A 1-5; truncated repeat occupies 980–998; sequence DFRSVLGGKKKLPAENGSS. One copy of the 2-1; truncated repeat lies at 999-1003; that stretch reads SAETL. The segment at 999–1063 is 6 X 12 AA approximate tandem repeats; it reads SAETLNAKAV…KPDENLKSAS (65 aa). 5 tandem repeats follow at residues 1004–1015, 1016–1027, 1028–1039, 1040–1051, and 1052–1063. The span at 1054–1077 shows a compositional bias: basic and acidic residues; that stretch reads KPDENLKSASKEELKKDVKNDVNC. An actin-binding (calcium/calmodulin-insensitive) region spans residues 1061–1460; it reads SASKEELKKD…TVTINTEQKV (400 aa). The Ig-like C2-type 7 domain occupies 1098-1186; the sequence is PAFKQKLQDV…GQAECSCQVT (89 aa). Cys1119 and Cys1170 form a disulfide bridge. A disordered region spans residues 1192-1237; it reads ASENTKAPEMKSRRPKSSLPPVLGTESDATVKKKPAPKTPPKAAMP. The region spanning 1238-1326 is the Ig-like C2-type 8 domain; sequence PQIIQFPEDQ…GSRQAQVNLT (89 aa). The 93-residue stretch at 1334 to 1426 folds into the Fibronectin type-III domain; that stretch reads PAGTPCASDI…QESELTTVGE (93 aa). The span at 1413 to 1422 shows a compositional bias: polar residues; that stretch reads SEPSQESELT. The tract at residues 1413–1446 is disordered; the sequence is SEPSQESELTTVGEKPEEPKDEVEVSDDDEKEPE. Residues 1431 to 1445 are compositionally biased toward acidic residues; the sequence is PKDEVEVSDDDEKEP. At Ser1438 the chain carries Phosphoserine. Tyr1449 is subject to Phosphotyrosine; by ABL1. The 256-residue stretch at 1464–1719 folds into the Protein kinase domain; the sequence is YDIEERLGSG…CTQCLQHPWL (256 aa). ATP contacts are provided by residues 1470 to 1478 and Lys1493; that span reads LGSGKFGQV. Tyr1575 carries the post-translational modification Phosphotyrosine; by ABL1. Catalysis depends on Asp1585, which acts as the Proton acceptor. Tyr1635 carries the phosphotyrosine; by ABL1 modification. The segment at 1711–1774 is calmodulin-binding; the sequence is TQCLQHPWLM…SGLSGRKSST (64 aa). 5 positions are modified to phosphoserine: Ser1759, Ser1760, Ser1772, Ser1773, and Ser1776. The segment at 1767–1787 is disordered; the sequence is LSGRKSSTGSPTSPLNAEKLE. A compositionally biased stretch (polar residues) spans 1770–1781; sequence RKSSTGSPTSPL. Thr1778 is modified (phosphothreonine). Ser1779 is subject to Phosphoserine. The Ig-like C2-type 9 domain maps to 1809 to 1898; it reads PYFSKTIRDL…GEATCTAELI (90 aa). Cysteines 1830 and 1882 form a disulfide.

It belongs to the protein kinase superfamily. CAMK Ser/Thr protein kinase family. In terms of assembly, all isoforms including Telokin bind calmodulin. Interacts with SVIL. Interacts with CTTN; this interaction is reduced during thrombin-induced endothelial cell (EC) contraction but is promoted by the barrier-protective agonist sphingosine 1-phosphate (S1P) within lamellipodia. A complex made of ABL1, CTTN and MYLK regulates cortical actin-based cytoskeletal rearrangement critical to sphingosine 1-phosphate (S1P)-mediated endothelial cell (EC) barrier enhancement. Binds to NAA10/ARD1 and PTK2B/PYK2. Requires Mg(2+) as cofactor. Ca(2+) is required as a cofactor. In terms of processing, can probably be down-regulated by phosphorylation. Tyrosine phosphorylation by ABL1 increases kinase activity, reverses MLCK-mediated inhibition of Arp2/3-mediated actin polymerization, and enhances CTTN-binding. Phosphorylation by SRC at Tyr-464 and Tyr-471 promotes CTTN binding. Post-translationally, the C-terminus is deglutamylated by AGTPBP1/CCP1, AGBL1/CCP4 and AGBL4/CCP6, leading to the formation of Myosin light chain kinase, smooth muscle, deglutamylated form. The consequences of C-terminal deglutamylation are unknown. Acetylated at Lys-608 by NAA10/ARD1 via a calcium-dependent signaling; this acetylation represses kinase activity and reduces tumor cell migration. Smooth muscle and non-muscle isozymes are expressed in a wide variety of adult and fetal tissues and in cultured endothelium with qualitative expression appearing to be neither tissue- nor development-specific. Non-muscle isoform 2 is the dominant splice variant expressed in various tissues. Telokin has been found in a wide variety of adult and fetal tissues. Accumulates in well differentiated enterocytes of the intestinal epithelium in response to tumor necrosis factor (TNF).

The protein resides in the cytoplasm. It is found in the cell projection. The protein localises to the lamellipodium. Its subcellular location is the cleavage furrow. It localises to the cytoskeleton. The protein resides in the stress fiber. It catalyses the reaction L-seryl-[myosin light chain] + ATP = O-phospho-L-seryl-[myosin light chain] + ADP + H(+). The catalysed reaction is L-threonyl-[myosin light chain] + ATP = O-phospho-L-threonyl-[myosin light chain] + ADP + H(+). With respect to regulation, isoform 1 is activated by phosphorylation on Tyr-464 and Tyr-471. Isoforms which lack these tyrosine residues are not regulated in this way. All catalytically active isoforms require binding to calcium and calmodulin for activation. Repressed by organometallic pyridylnaphthalimide complexes, wortmannin, ML-7 (a synthetic naphthalenesulphonyl derivative that inhibits the binding of ATP to MLCK) and ML-9. Its function is as follows. Calcium/calmodulin-dependent myosin light chain kinase implicated in smooth muscle contraction via phosphorylation of myosin light chains (MLC). Also regulates actin-myosin interaction through a non-kinase activity. Phosphorylates PTK2B/PYK2 and myosin light-chains. Involved in the inflammatory response (e.g. apoptosis, vascular permeability, leukocyte diapedesis), cell motility and morphology, airway hyperreactivity and other activities relevant to asthma. Required for tonic airway smooth muscle contraction that is necessary for physiological and asthmatic airway resistance. Necessary for gastrointestinal motility. Implicated in the regulation of endothelial as well as vascular permeability, probably via the regulation of cytoskeletal rearrangements. In the nervous system it has been shown to control the growth initiation of astrocytic processes in culture and to participate in transmitter release at synapses formed between cultured sympathetic ganglion cells. Critical participant in signaling sequences that result in fibroblast apoptosis. Plays a role in the regulation of epithelial cell survival. Required for epithelial wound healing, especially during actomyosin ring contraction during purse-string wound closure. Mediates RhoA-dependent membrane blebbing. Triggers TRPC5 channel activity in a calcium-dependent signaling, by inducing its subcellular localization at the plasma membrane. Promotes cell migration (including tumor cells) and tumor metastasis. PTK2B/PYK2 activation by phosphorylation mediates ITGB2 activation and is thus essential to trigger neutrophil transmigration during acute lung injury (ALI). May regulate optic nerve head astrocyte migration. Probably involved in mitotic cytoskeletal regulation. Regulates tight junction probably by modulating ZO-1 exchange in the perijunctional actomyosin ring. Mediates burn-induced microvascular barrier injury; triggers endothelial contraction in the development of microvascular hyperpermeability by phosphorylating MLC. Essential for intestinal barrier dysfunction. Mediates Giardia spp.-mediated reduced epithelial barrier function during giardiasis intestinal infection via reorganization of cytoskeletal F-actin and tight junctional ZO-1. Necessary for hypotonicity-induced Ca(2+) entry and subsequent activation of volume-sensitive organic osmolyte/anion channels (VSOAC) in cervical cancer cells. Responsible for high proliferative ability of breast cancer cells through anti-apoptosis. This Homo sapiens (Human) protein is Myosin light chain kinase, smooth muscle.